Consider the following 624-residue polypeptide: Glutamine--fructose-6-phosphate aminotransferase [isomerizing] (624 aa).

Catalysis depends on Cys-2, which acts as the Nucleophile; for GATase activity. The 224-residue stretch at 2-225 (CGIVGYVGRR…QDQAVVITAD (224 aa)) folds into the Glutamine amidotransferase type-2 domain. SIS domains follow at residues 297 to 436 (SDQE…ARGT) and 469 to 614 (LAHR…VDKP). Lys-619 (for Fru-6P isomerization activity) is an active-site residue.

As to quaternary structure, homodimer.

Its subcellular location is the cytoplasm. It catalyses the reaction D-fructose 6-phosphate + L-glutamine = D-glucosamine 6-phosphate + L-glutamate. In terms of biological role, catalyzes the first step in hexosamine metabolism, converting fructose-6P into glucosamine-6P using glutamine as a nitrogen source. The sequence is that of Glutamine--fructose-6-phosphate aminotransferase [isomerizing] from Mycobacterium bovis (strain ATCC BAA-935 / AF2122/97).